The chain runs to 307 residues: Replication termination factor 2 (307 aa).

The disordered stretch occupies residues 193-296; it reads AKLEKKTKKP…SSAKRSKEES (104 aa). Over residues 227–241 the composition is skewed to basic and acidic residues; that stretch reads GKPEEADPDPREKKS. Ser-288 carries the post-translational modification Phosphoserine.

Belongs to the rtf2 family. As to quaternary structure, interacts with DDI2; probably also interacts with DDI1. Post-translationally, undergoes proteasomal degradation, via DDI1 and DDI2. Removal from stalled replisomes and degradation are required for genome stability.

It localises to the chromosome. Its function is as follows. Replication termination factor which is a component of the elongating replisome. Required for ATR pathway signaling upon DNA damage and has a positive activity during DNA replication. Might function to facilitate fork pausing at replication fork barriers like the rDNA. May be globally required to stimulate ATR signaling after the fork stalls or encounters a lesion. Interacts with nascent DNA. The protein is Replication termination factor 2 of Mus musculus (Mouse).